The chain runs to 313 residues: MTQWYPASPALWQGRDDSIEAPDARRLFQTVTRSETFSPENWQQKIALMGFACDEGVKRNAGRPGAAGGPDALRKALANMASHQGHERLVDLGNWVAPTPDLEGAQQVLRDAVSRCLRAGMRTLVLGGGHETAFGHGAGVLDAFAQESVGIINLDAHLDLRQTDRATSGTPFRQLAQLCDAQSRAFHYACFGVSRAANTQALWREAQWRNVTVVEDLDCHDALAQMAQFIDKVDKIYLTIDLDVLPVWEMPAVSAPAALGVPLIQVLRLIEPVCRSGKLQAADLVEFNPRFDEDGAAARVAARLGWQIAHWWR.

Residues H130, D155, H157, D159, D241, and D243 each contribute to the Mn(2+) site.

This sequence belongs to the arginase family. It depends on Mn(2+) as a cofactor.

The catalysed reaction is N-formimidoyl-L-glutamate + H2O = formamide + L-glutamate. It participates in amino-acid degradation; L-histidine degradation into L-glutamate; L-glutamate from N-formimidoyl-L-glutamate (hydrolase route): step 1/1. In terms of biological role, catalyzes the conversion of N-formimidoyl-L-glutamate to L-glutamate and formamide. The chain is Formimidoylglutamase from Salmonella paratyphi B (strain ATCC BAA-1250 / SPB7).